Consider the following 485-residue polypeptide: Sperm-associated antigen 8 (485 aa).

Disordered regions lie at residues 1–42 (METN…SPRS), 75–98 (KTPA…EPCA), and 127–215 (TTTD…CIPP). Over residues 132 to 150 (SSNPGPVPGSSSGPVLGSS) the composition is skewed to low complexity. Over residues 151–191 (SGAGHGSGSGSGPGCGSVPGSGSGPGPGSGPGSGPGHGSGS) the composition is skewed to gly residues. Mn regions lie at residues 327–340 (SSTT…PPGN) and 379–393 (ESVT…LAQA).

The protein belongs to the SPAG8 family. Microtubule inner protein component of sperm flagellar doublet microtubules. Interacts with FHL5 (via second LIM domain). Interacts with RANBP9. As to expression, expressed in testis (germ cells), but not in liver, kidney, prostate and small intestine. Expressed in airway epithelial cells.

It localises to the cytoplasm. Its subcellular location is the nucleus. The protein resides in the cytoplasmic vesicle. The protein localises to the secretory vesicle. It is found in the acrosome. It localises to the cytoskeleton. Its subcellular location is the microtubule organizing center. The protein resides in the spindle. The protein localises to the cilium axoneme. It is found in the flagellum axoneme. Its function is as follows. Microtubule inner protein (MIP) part of the dynein-decorated doublet microtubules (DMTs) in cilia axoneme, which is required for motile cilia beating. Plays a role in spermatogenesis by enhancing the binding of CREM isoform tau to its coactivator FHL5 and increasing the FHL5-regulated transcriptional activation of CREM isoform tau. Involved in the acrosome reaction and in binding of sperm to the zona pellucida. Plays a role in regulation of the cell cycle by controlling progression through the G2/M phase, possibly by delaying the activation of CDK1 which is required for entry into mitosis. May play a role in fertility and microtubule formation through interaction with RANBP9. This chain is Sperm-associated antigen 8, found in Homo sapiens (Human).